The primary structure comprises 560 residues: Diphtheria toxin homolog CRM228 (560 aa).

Residues 1 to 25 (MSRKLFASILIGALLGIGAPPSAHA) form the signal peptide. Residues histidine 46 and tyrosine 90 each contribute to the NAD(+) site. The active site involves glutamate 173. 2 disulfide bridges follow: cysteine 211–cysteine 226 and cysteine 486–cysteine 496.

The sequence is that of Diphtheria toxin homolog CRM228 from Corynebacterium diphtheriae.